The following is a 272-amino-acid chain: uncharacterized protein (272 aa).

The protein belongs to the sodium:galactoside symporter (TC 2.A.2) family.

This is an uncharacterized protein from Pseudescherichia vulneris (Escherichia vulneris).